A 225-amino-acid chain; its full sequence is MTIFYLVFIAVIIIIILYVLYLRPLYSGTSVIKGNTQYKADKLMIIAHPDDELIFGSKELIENPGWKVICITNGSKKSVNKISICYLMGHRSTYRRDEFINMMNLLHCQYEIWDYEDNYFNSNWNLKQLKNQLENLLREKNYKMVLTHNLAGEYGHTQHKTISKLLYDINPPNLYTFYYDSNTINPYLVLIKKLSHVYQSQDKIIKKNYKYIEHQSKIAVKNNSK.

A helical transmembrane segment spans residues 2-22 (TIFYLVFIAVIIIIILYVLYL). The N-linked (GlcNAc...) asparagine; by host glycan is linked to Asn-73. The stretch at 114–146 (DYEDNYFNSNWNLKQLKNQLENLLREKNYKMVL) forms a coiled coil. Residue Asn-222 is glycosylated (N-linked (GlcNAc...) asparagine; by host).

Its subcellular location is the membrane. This is an uncharacterized protein from Acanthamoeba polyphaga (Amoeba).